Consider the following 883-residue polypeptide: Alanine--tRNA ligase (883 aa).

Zn(2+) contacts are provided by histidine 560, histidine 564, cysteine 665, and histidine 669.

Belongs to the class-II aminoacyl-tRNA synthetase family. The cofactor is Zn(2+).

It localises to the cytoplasm. The enzyme catalyses tRNA(Ala) + L-alanine + ATP = L-alanyl-tRNA(Ala) + AMP + diphosphate. Catalyzes the attachment of alanine to tRNA(Ala) in a two-step reaction: alanine is first activated by ATP to form Ala-AMP and then transferred to the acceptor end of tRNA(Ala). Also edits incorrectly charged Ser-tRNA(Ala) and Gly-tRNA(Ala) via its editing domain. This is Alanine--tRNA ligase from Mesomycoplasma hyopneumoniae (strain 232) (Mycoplasma hyopneumoniae).